Reading from the N-terminus, the 86-residue chain is YcgL domain-containing protein XAC4085 (86 aa).

The region spanning 1 to 83 (MHAYVYKSQR…PKTIVLAGEC (83 aa)) is the YcgL domain.

This is YcgL domain-containing protein XAC4085 from Xanthomonas axonopodis pv. citri (strain 306).